We begin with the raw amino-acid sequence, 190 residues long: Small ribosomal subunit protein eS7 (190 aa).

The protein belongs to the eukaryotic ribosomal protein eS7 family.

In Avicennia marina (Grey mangrove), this protein is Small ribosomal subunit protein eS7 (RPS7).